A 3343-amino-acid chain; its full sequence is Cadherin-3 (3343 aa).

Residues 1-26 form the signal peptide; it reads MTIRIFFSIFLLNHLIFFHLFNFTHQ. A glycan (N-linked (GlcNAc...) asparagine) is linked at asparagine 22. At 27 to 3228 the chain is on the extracellular side; sequence FSEETIKFSV…LFSNFSNTTT (3202 aa). Cadherin domains lie at 28 to 117, 118 to 229, and 242 to 330; these read SEET…SPIF, PIDV…PPNF, and PNTK…EPNI. Asparagine 149, asparagine 250, asparagine 288, asparagine 369, asparagine 467, and asparagine 612 each carry an N-linked (GlcNAc...) asparagine glycan. Positions 632 to 738 constitute a Cadherin 4 domain; that stretch reads ICQITEIHVL…EDVNDNVPKF (107 aa). N-linked (GlcNAc...) asparagine glycosylation is found at asparagine 752, asparagine 806, asparagine 941, asparagine 966, asparagine 970, asparagine 985, asparagine 1042, asparagine 1335, asparagine 1425, asparagine 1429, asparagine 1557, asparagine 1563, asparagine 1597, asparagine 1624, asparagine 1695, and asparagine 1702. The Cadherin 5 domain maps to 1279-1368; the sequence is RENELMFEIE…ADVNDNKPKI (90 aa). 3 Cadherin domains span residues 1545-1648, 1676-1756, and 1757-1857; these read DKAA…APRF, AEDL…TPEF, and ELSS…HPMI. Residues asparagine 1895 and asparagine 1900 are each glycosylated (N-linked (GlcNAc...) asparagine). Cadherin domains follow at residues 1954-2045, 2046-2145, and 2146-2245; these read TVSV…SPRF, DQQL…NAPR, and FSRI…APIF. N-linked (GlcNAc...) asparagine glycans are attached at residues asparagine 2053, asparagine 2129, asparagine 2203, asparagine 2382, asparagine 2391, asparagine 2410, asparagine 2414, asparagine 2431, asparagine 2527, asparagine 2530, asparagine 2564, asparagine 2621, asparagine 2665, asparagine 2712, asparagine 2798, asparagine 2809, asparagine 2927, asparagine 2976, and asparagine 3045. The 166-residue stretch at 3040–3205 folds into the Laminin G-like domain; it reads EISVRNGTSH…SSTGTSRNEC (166 aa). An intrachain disulfide couples cysteine 3172 to cysteine 3205. N-linked (GlcNAc...) asparagine glycosylation is found at asparagine 3222 and asparagine 3225. Residues 3229–3250 form a helical membrane-spanning segment; sequence LILLITLALISLIGFSVCLLAI. Residues 3251-3343 are Cytoplasmic-facing; sequence RRRWRQKSPG…RDGHINMAYL (93 aa). Positions 3257 to 3277 are disordered; that stretch reads KSPGDQKQTERSNGWTGHVMP.

As to expression, expressed in the anchor cell.

It localises to the cell membrane. Its subcellular location is the basolateral cell membrane. It is found in the cell junction. Its function is as follows. Cell adhesion protein involved in the control of epithelial morphogenesis. Together with metalloproteinase zmp-1 and hemicentin him-4, plays a role in anchor cell (AC) invasion during postembryonic vulval development. The protein is Cadherin-3 (cdh-3) of Caenorhabditis elegans.